Here is a 152-residue protein sequence, read N- to C-terminus: Transcriptional repressor NrdR (152 aa).

The segment at 3-34 (CPFCGHADTQVVDSRVSEDGASIRRRRRCLEC) is a zinc-finger region. The region spanning 49-139 (PQVVKQDGHR…VYRSFQDVAE (91 aa)) is the ATP-cone domain.

The protein belongs to the NrdR family. The cofactor is Zn(2+).

Functionally, negatively regulates transcription of bacterial ribonucleotide reductase nrd genes and operons by binding to NrdR-boxes. The protein is Transcriptional repressor NrdR of Laribacter hongkongensis (strain HLHK9).